The primary structure comprises 380 residues: Protein Wnt-5a (380 aa).

The first 40 residues, 1-40, serve as a signal peptide directing secretion; sequence MRKNLWTFQFGGEASGLVGSAMVSQHFVVLLMSLYCLTQS. Cys-104 and Cys-115 are joined by a disulfide. N-linked (GlcNAc...) asparagine glycans are attached at residues Asn-114 and Asn-120. Intrachain disulfides connect Cys-154/Cys-162, Cys-164/Cys-182, Cys-238/Cys-252, Cys-240/Cys-247, Cys-309/Cys-340, Cys-325/Cys-335, Cys-339/Cys-379, Cys-355/Cys-370, Cys-357/Cys-367, and Cys-362/Cys-363. The O-palmitoleoyl serine; by PORCN moiety is linked to residue Ser-244. N-linked (GlcNAc...) asparagine glycans are attached at residues Asn-312 and Asn-326.

Belongs to the Wnt family. Post-translationally, palmitoleoylation is required for efficient binding to frizzled receptors. Depalmitoleoylation leads to Wnt signaling pathway inhibition. As to expression, found primarily in ectoderm with lower levels of expression in mesoderm. Detected in the head and tail with lower expression in the middle of the embryo. No expression was found in the notochord.

Its subcellular location is the secreted. It localises to the extracellular space. It is found in the extracellular matrix. In terms of biological role, ligand for members of the frizzled family of seven transmembrane receptors. Can activate or inhibit canonical Wnt signaling, depending on receptor context. Plays a role in normal embryonic development. This Xenopus laevis (African clawed frog) protein is Protein Wnt-5a (wnt5a).